Reading from the N-terminus, the 334-residue chain is Porphobilinogen deaminase (334 aa).

Cys255 is subject to S-(dipyrrolylmethanemethyl)cysteine.

The protein belongs to the HMBS family. In terms of assembly, monomer. It depends on dipyrromethane as a cofactor.

The catalysed reaction is 4 porphobilinogen + H2O = hydroxymethylbilane + 4 NH4(+). Its pathway is porphyrin-containing compound metabolism; protoporphyrin-IX biosynthesis; coproporphyrinogen-III from 5-aminolevulinate: step 2/4. Its function is as follows. Tetrapolymerization of the monopyrrole PBG into the hydroxymethylbilane pre-uroporphyrinogen in several discrete steps. This chain is Porphobilinogen deaminase, found in Burkholderia orbicola (strain MC0-3).